Consider the following 53-residue polypeptide: UPF0391 membrane protein YtjA (53 aa).

2 helical membrane-spanning segments follow: residues 4-24 and 30-48; these read WGII…GGLA and AAKI…SLFM.

The protein belongs to the UPF0391 family.

It localises to the cell membrane. The sequence is that of UPF0391 membrane protein YtjA from Salmonella agona (strain SL483).